A 387-amino-acid polypeptide reads, in one-letter code: SLC2A4 regulator (387 aa).

Disordered regions lie at residues 1-97 (MERP…RATP) and 139-179 (EALV…PPEA). The span at 27 to 36 (GPGPRAAPVT) shows a compositional bias: low complexity. The C2H2-type zinc finger occupies 200-225 (FQCLWKSCGKVLSTASAMQRHIRLVH). Positions 253 to 263 (LTDGLSSLTPV) match the Nuclear export signal motif. A phosphoserine mark is found at S264 and S268. Positions 283 to 305 (EPPALPSPLRPPAPPLPPPPVLS) are disordered. A compositionally biased stretch (pro residues) spans 285–303 (PALPSPLRPPAPPLPPPPV). A Nuclear localization signal motif is present at residues 351 to 354 (RKPR).

Interacts with MEF2A. As to expression, according to PubMed:14630949, expressed in heart, skeletal muscle, liver, kidney and pancreas; undetectable in lung, placenta or brain. According to PubMed:14625278, ubiquitously expressed, with lowest expression in brain and ileum.

The protein localises to the cytoplasm. It localises to the nucleus. Functionally, transcription factor involved in SLC2A4 and HD gene transactivation. Binds to the consensus sequence 5'-GCCGGCG-3'. This chain is SLC2A4 regulator (SLC2A4RG), found in Homo sapiens (Human).